A 342-amino-acid chain; its full sequence is 4-hydroxy-2-oxovalerate aldolase (342 aa).

A Pyruvate carboxyltransferase domain is found at Ile-5 to Gln-257. A substrate-binding site is contributed by Arg-13–Asp-14. Asp-14 is a Mn(2+) binding site. His-17 serves as the catalytic Proton acceptor. Residues Ser-167 and His-196 each coordinate substrate. Mn(2+)-binding residues include His-196 and His-198. Substrate is bound at residue Tyr-287.

It belongs to the 4-hydroxy-2-oxovalerate aldolase family.

It catalyses the reaction (S)-4-hydroxy-2-oxopentanoate = acetaldehyde + pyruvate. In Acidovorax sp. (strain JS42), this protein is 4-hydroxy-2-oxovalerate aldolase.